A 283-amino-acid chain; its full sequence is Pantothenate synthetase (283 aa).

30–37 (MGALHRGH) provides a ligand contact to ATP. The active-site Proton donor is His-37. (R)-pantoate is bound at residue Gln-61. Gln-61 contributes to the beta-alanine binding site. Residue 147–150 (GQKD) participates in ATP binding. Residue Gln-153 participates in (R)-pantoate binding. ATP-binding positions include Ile-176 and 184–187 (MSSR).

It belongs to the pantothenate synthetase family. As to quaternary structure, homodimer.

The protein localises to the cytoplasm. It carries out the reaction (R)-pantoate + beta-alanine + ATP = (R)-pantothenate + AMP + diphosphate + H(+). It participates in cofactor biosynthesis; (R)-pantothenate biosynthesis; (R)-pantothenate from (R)-pantoate and beta-alanine: step 1/1. Its function is as follows. Catalyzes the condensation of pantoate with beta-alanine in an ATP-dependent reaction via a pantoyl-adenylate intermediate. The sequence is that of Pantothenate synthetase from Cytophaga hutchinsonii (strain ATCC 33406 / DSM 1761 / CIP 103989 / NBRC 15051 / NCIMB 9469 / D465).